Reading from the N-terminus, the 529-residue chain is 1,4-beta-D-glucan cellobiohydrolase xynA (529 aa).

An N-terminal signal peptide occupies residues 1–25; the sequence is MSALNSFNMYKSALILGSLLATAGA. Residues 26–456 are catalytic; that stretch reads QQIGTYTAET…SDIKVGPFNS (431 aa). Asn-70 and Asn-219 each carry an N-linked (GlcNAc...) asparagine glycan. The active-site Nucleophile is the Glu-234. The active-site Proton donor is Glu-239. Residue Asn-413 is glycosylated (N-linked (GlcNAc...) asparagine). The interval 413–438 is disordered; the sequence is NETGTPGAARGSCPTTSGNPKTVESQ. A compositionally biased stretch (polar residues) spans 425–438; sequence CPTTSGNPKTVESQ. A glycan (N-linked (GlcNAc...) asparagine) is linked at Asn-455. The interval 457–493 is thr-rich linker; sequence TFSGGTSTGGSTTTTASGTTSTKASTTSTSSTSTGTG. The segment at 460-491 is disordered; it reads GGTSTGGSTTTTASGTTSTKASTTSTSSTSTG. One can recognise a CBM1 domain in the interval 493–529; the sequence is GVAAHWGQCGGQGWTGPTTCASGTTCTVVNPYYSQCL. 2 disulfide bridges follow: Cys-501–Cys-518 and Cys-512–Cys-528.

The protein belongs to the glycosyl hydrolase 7 (cellulase C) family.

The protein resides in the secreted. It catalyses the reaction Hydrolysis of (1-&gt;4)-beta-D-glucosidic linkages in cellulose and cellotetraose, releasing cellobiose from the non-reducing ends of the chains.. Its activity is regulated as follows. Cellobiose inhibits xynA at high concentrations. In terms of biological role, the biological conversion of cellulose to glucose generally requires three types of hydrolytic enzymes: (1) Endoglucanases which cut internal beta-1,4-glucosidic bonds; (2) Exocellobiohydrolases that cut the disaccharide cellobiose from the non-reducing end of the cellulose polymer chain; (3) Beta-1,4-glucosidases which hydrolyze the cellobiose and other short cello-oligosaccharides to glucose. In Talaromyces funiculosus (Fruitlet core rot fungus), this protein is 1,4-beta-D-glucan cellobiohydrolase xynA (xynA).